A 340-amino-acid chain; its full sequence is Nicotinate-nucleotide--dimethylbenzimidazole phosphoribosyltransferase (340 aa).

Glu305 acts as the Proton acceptor in catalysis.

This sequence belongs to the CobT family.

The catalysed reaction is 5,6-dimethylbenzimidazole + nicotinate beta-D-ribonucleotide = alpha-ribazole 5'-phosphate + nicotinate + H(+). Its pathway is nucleoside biosynthesis; alpha-ribazole biosynthesis; alpha-ribazole from 5,6-dimethylbenzimidazole: step 1/2. Catalyzes the synthesis of alpha-ribazole-5'-phosphate from nicotinate mononucleotide (NAMN) and 5,6-dimethylbenzimidazole (DMB). The polypeptide is Nicotinate-nucleotide--dimethylbenzimidazole phosphoribosyltransferase (Allorhizobium ampelinum (strain ATCC BAA-846 / DSM 112012 / S4) (Agrobacterium vitis (strain S4))).